The primary structure comprises 324 residues: Mating-type protein A-3 (324 aa).

Positions 147–215 (TSRPRNQFVL…RHRAENPHLY (69 aa)) form a DNA-binding region, HMG box.

Its subcellular location is the nucleus. In terms of biological role, required, together with mating-type protein A-2, for efficient ascospore formation. This Neurospora crassa (strain ATCC 24698 / 74-OR23-1A / CBS 708.71 / DSM 1257 / FGSC 987) protein is Mating-type protein A-3 (mtA-3).